The following is a 130-amino-acid chain: Blasticidin-S deaminase (130 aa).

Residues 1 to 129 (MPLSQEESTL…ELLPSGYMNR (129 aa)) form the CMP/dCMP-type deaminase domain. S28 contacts substrate. C54 is a Zn(2+) binding site. E56 acts as the Proton donor in catalysis. R82 is a binding site for substrate. Residues C88 and C91 each contribute to the Zn(2+) site. Y126 contacts substrate.

Belongs to the cytidine and deoxycytidylate deaminase family. In terms of assembly, homotetramer. The cofactor is Zn(2+).

It catalyses the reaction blasticidin S + H2O + H(+) = deaminohydroxyblasticidin S + NH4(+). Its function is as follows. Catalyzes the deamination of the cytosine moiety of the antibiotics blasticidin S, cytomycin and acetylblasticidin S. This is Blasticidin-S deaminase (bsd) from Aspergillus terreus (strain NIH 2624 / FGSC A1156).